Consider the following 971-residue polypeptide: Xylanolytic transcriptional activator xlnR (971 aa).

2 disordered regions span residues methionine 1–methionine 25 and glycine 55–arginine 123. The span at phenylalanine 9–serine 18 shows a compositional bias: low complexity. Positions leucine 67–phenylalanine 96 are enriched in polar residues. A DNA-binding region (zn(2)-C6 fungal-type) is located at residues cysteine 129–cysteine 155. Polar residues-rich tracts occupy residues asparagine 182–serine 199, asparagine 227–aspartate 241, and glutamine 249–serine 260. 3 disordered regions span residues asparagine 182 to glycine 263, leucine 295 to serine 316, and arginine 580 to proline 610.

Belongs to the xlnR/xlr1 family.

The protein resides in the nucleus. Its function is as follows. Transcriptional activator of the xylanolytic system. Involved in the regulation of extracellular cellulolytic and xylanolytic genes and in the regulation of the intracellular activities of D-xylose catabolic genes in the pentose catabolic pathway (PCP) in response to the presence of D-xylose. In Aspergillus flavus (strain ATCC 200026 / FGSC A1120 / IAM 13836 / NRRL 3357 / JCM 12722 / SRRC 167), this protein is Xylanolytic transcriptional activator xlnR (xlnR).